The sequence spans 135 residues: ATP synthase epsilon chain (135 aa).

The protein belongs to the ATPase epsilon chain family. F-type ATPases have 2 components, CF(1) - the catalytic core - and CF(0) - the membrane proton channel. CF(1) has five subunits: alpha(3), beta(3), gamma(1), delta(1), epsilon(1). CF(0) has three main subunits: a, b and c.

The protein localises to the cell inner membrane. Functionally, produces ATP from ADP in the presence of a proton gradient across the membrane. The protein is ATP synthase epsilon chain of Rhodopseudomonas palustris (strain BisB5).